The sequence spans 268 residues: Aliphatic sulfonates import ATP-binding protein SsuB (268 aa).

The region spanning 15–236 (LAVRNLQKTF…VRGSHRLAAL (222 aa)) is the ABC transporter domain. An ATP-binding site is contributed by 47-54 (GRSGCGKS).

Belongs to the ABC transporter superfamily. Aliphatic sulfonates importer (TC 3.A.1.17.2) family. In terms of assembly, the complex is composed of two ATP-binding proteins (SsuB), two transmembrane proteins (SsuC) and a solute-binding protein (SsuA).

It localises to the cell inner membrane. It catalyses the reaction ATP + H2O + aliphatic sulfonate-[sulfonate-binding protein]Side 1 = ADP + phosphate + aliphatic sulfonateSide 2 + [sulfonate-binding protein]Side 1.. Its function is as follows. Part of the ABC transporter complex SsuABC involved in aliphatic sulfonates import. Responsible for energy coupling to the transport system. The chain is Aliphatic sulfonates import ATP-binding protein SsuB from Pseudomonas fluorescens (strain Pf0-1).